The chain runs to 525 residues: Lysine--tRNA ligase (525 aa).

Glu419 and Glu426 together coordinate Mg(2+).

Belongs to the class-II aminoacyl-tRNA synthetase family. As to quaternary structure, homodimer. Mg(2+) serves as cofactor.

Its subcellular location is the cytoplasm. The enzyme catalyses tRNA(Lys) + L-lysine + ATP = L-lysyl-tRNA(Lys) + AMP + diphosphate. The sequence is that of Lysine--tRNA ligase (lysS) from Deinococcus radiodurans (strain ATCC 13939 / DSM 20539 / JCM 16871 / CCUG 27074 / LMG 4051 / NBRC 15346 / NCIMB 9279 / VKM B-1422 / R1).